Reading from the N-terminus, the 315-residue chain is MNPNFLDFEQPIADLQAKIEELRLVGNDNSLNIGDEISRLQDKSKTLTEDIFGKLTSWQIARLARHPKRPYTLDYIEHIFTEFDELHGDRHFSDDAAIVGGVARLEDQPVMVIGHQKGREVREKVRRNFGMPRPEGYRKACRLMEMAERFKMPILTFIDTPGAYPGIDAEERNQSEAIAWNLRVMARLKTPIIATVIGEGGSGGALAIGVCDQLNMLQYSTYAVISPEGCASILWKTAEKAPDAAEAMGITAERLKGLGIVDKVISEPLGGAHRDPAAAAASIRAELSSQLAMLKKFDNEALLKRRYDRLMSYGL.

Residues 40-293 (LQDKSKTLTE…RAELSSQLAM (254 aa)) form the CoA carboxyltransferase C-terminal domain.

This sequence belongs to the AccA family. In terms of assembly, acetyl-CoA carboxylase is a heterohexamer composed of biotin carboxyl carrier protein (AccB), biotin carboxylase (AccC) and two subunits each of ACCase subunit alpha (AccA) and ACCase subunit beta (AccD).

It localises to the cytoplasm. The enzyme catalyses N(6)-carboxybiotinyl-L-lysyl-[protein] + acetyl-CoA = N(6)-biotinyl-L-lysyl-[protein] + malonyl-CoA. The protein operates within lipid metabolism; malonyl-CoA biosynthesis; malonyl-CoA from acetyl-CoA: step 1/1. In terms of biological role, component of the acetyl coenzyme A carboxylase (ACC) complex. First, biotin carboxylase catalyzes the carboxylation of biotin on its carrier protein (BCCP) and then the CO(2) group is transferred by the carboxyltransferase to acetyl-CoA to form malonyl-CoA. The polypeptide is Acetyl-coenzyme A carboxylase carboxyl transferase subunit alpha (Pseudomonas fluorescens (strain Pf0-1)).